Here is a 209-residue protein sequence, read N- to C-terminus: Methylthioribulose-1-phosphate dehydratase (209 aa).

Residues His99 and His101 each contribute to the Zn(2+) site.

It belongs to the aldolase class II family. MtnB subfamily. Zn(2+) serves as cofactor.

It carries out the reaction 5-(methylsulfanyl)-D-ribulose 1-phosphate = 5-methylsulfanyl-2,3-dioxopentyl phosphate + H2O. It participates in amino-acid biosynthesis; L-methionine biosynthesis via salvage pathway; L-methionine from S-methyl-5-thio-alpha-D-ribose 1-phosphate: step 2/6. Its function is as follows. Catalyzes the dehydration of methylthioribulose-1-phosphate (MTRu-1-P) into 2,3-diketo-5-methylthiopentyl-1-phosphate (DK-MTP-1-P). The protein is Methylthioribulose-1-phosphate dehydratase of Leptospira biflexa serovar Patoc (strain Patoc 1 / Ames).